Here is a 143-residue protein sequence, read N- to C-terminus: uncharacterized protein (143 aa).

Helical transmembrane passes span 20–39 (FKYCSTSLFVLILFNSWITV) and 113–135 (YFSLQISLSFAFSGICVKYITGL).

It localises to the membrane. This is an uncharacterized protein from Saccharomyces cerevisiae (strain ATCC 204508 / S288c) (Baker's yeast).